Here is a 166-residue protein sequence, read N- to C-terminus: Large ribosomal subunit protein uL10 (166 aa).

This sequence belongs to the universal ribosomal protein uL10 family. In terms of assembly, part of the ribosomal stalk of the 50S ribosomal subunit. The N-terminus interacts with L11 and the large rRNA to form the base of the stalk. The C-terminus forms an elongated spine to which L12 dimers bind in a sequential fashion forming a multimeric L10(L12)X complex.

Forms part of the ribosomal stalk, playing a central role in the interaction of the ribosome with GTP-bound translation factors. The chain is Large ribosomal subunit protein uL10 from Ureaplasma urealyticum serovar 10 (strain ATCC 33699 / Western).